The primary structure comprises 227 residues: PKHD-type hydroxylase Mnod_1077 (227 aa).

The Fe2OG dioxygenase domain maps to 78–178 (RVLPPLFNRY…RWSAFFWSQS (101 aa)). The Fe cation site is built by histidine 96, aspartate 98, and histidine 159. A 2-oxoglutarate-binding site is contributed by arginine 169.

The cofactor is Fe(2+). Requires L-ascorbate as cofactor.

The sequence is that of PKHD-type hydroxylase Mnod_1077 from Methylobacterium nodulans (strain LMG 21967 / CNCM I-2342 / ORS 2060).